The chain runs to 511 residues: Intermediate cleaving peptidase 55 (511 aa).

Residues Asp327, Asp338, His417, Glu444, and Glu467 each coordinate Mn(2+).

This sequence belongs to the peptidase M24B family. Mn(2+) serves as cofactor.

The protein resides in the nucleus. It is found in the mitochondrion inner membrane. It catalyses the reaction The enzyme cleaves the 36-Pro-Pro-37 bond of cysteine desulfurase (EC 2.8.1.7) removing three amino acid residues (Tyr-Ser-Pro) from the N-terminus after cleavage by mitochondrial processing peptidase.. Functionally, aminopeptidase which cleaves preprotein intermediates that carry destabilizing N-ter amino acid residues after the mitochondrial processing peptidase (MPP) cleavage site and is thus critical for stabilization of the mitochondrial proteome. The sequence is that of Intermediate cleaving peptidase 55 (ICP55) from Saccharomyces cerevisiae (strain ATCC 204508 / S288c) (Baker's yeast).